The following is a 277-amino-acid chain: MMGLRKMCRGSLMSKIIIGRYIPGDSLVYKMDPRGKLLITILFIWAIFLANNPITYAIITFFCFLAIIATGLKARVFWNGVKPLIGLIFFTSLLQLFFMTGGHVFWHWWIFSISSYGVENAIYIFIRFTLIILISTVMTVTTMPLEIADAMEWLLKPLKIFKVPVDEIALVISIALRFVPTLFDETLKIMNAQRSRGADFNDGGLIKRAKAIAPILVPLFIHSLETAIDLSTAMESRGYRGSAGRTKYRVLNWSKYDLISLAYFILLVGLLLIFRTH.

The next 6 helical transmembrane spans lie at 39-59 (ITIL…YAII), 61-81 (FFCF…WNGV), 85-105 (IGLI…GHVF), 121-141 (AIYI…MTVT), 163-183 (VPVD…PTLF), and 254-274 (SKYD…LLIF).

The protein belongs to the energy-coupling factor EcfT family. As to quaternary structure, forms a stable energy-coupling factor (ECF) transporter complex composed of 2 membrane-embedded substrate-binding proteins (S component), 2 ATP-binding proteins (A component) and 2 transmembrane proteins (T component). May be able to interact with more than 1 S component at a time.

The protein resides in the cell membrane. Its function is as follows. Transmembrane (T) component of an energy-coupling factor (ECF) ABC-transporter complex. Unlike classic ABC transporters this ECF transporter provides the energy necessary to transport a number of different substrates. The protein is Energy-coupling factor transporter transmembrane protein EcfT of Lactobacillus helveticus (strain DPC 4571).